A 142-amino-acid polypeptide reads, in one-letter code: MAWTSVLLMLLAYLTGCGPQPMVHQPPLASSSLGATIRLSCTLSNDHNIGIYSIYWYQQRPGHPPRFLLRYFSHSDKHQGPDIPPRFSGSKDTTRNLGYLSISELQPEDEAVYYCAVGLRSQEKKRMEREWEGEKSYTDLGS.

The N-terminal stretch at 1-19 is a signal peptide; the sequence is MAWTSVLLMLLAYLTGCGP. A framework-1 region spans residues 20–41; that stretch reads QPMVHQPPLASSSLGATIRLSC. Cysteines 41 and 115 form a disulfide. A complementarity-determining-1 region spans residues 42 to 56; the sequence is TLSNDHNIGIYSIYW. The framework-2 stretch occupies residues 57–70; sequence YQQRPGHPPRFLLR. The interval 71 to 81 is complementarity-determining-2; that stretch reads YFSHSDKHQGP. The segment at 82 to 115 is framework-3; the sequence is DIPPRFSGSKDTTRNLGYLSISELQPEDEAVYYC.

It belongs to the immunoglobulin superfamily. As to quaternary structure, interacts with IGLL1. Interacts with SYNV1/HRD1 (via N-terminus); this interaction leads to increased VPREB1A ubiquitination and degradation in pre-B cells, possibly through a lysosomal, not proteasomal, pathway. In terms of tissue distribution, only expressed by pre-B-cells.

It localises to the endoplasmic reticulum. Its function is as follows. Associates with the Ig-mu chain to form a molecular complex that is expressed on the surface of pre-B-cells. This complex presumably regulates Ig gene rearrangements in the early steps of B-cell differentiation. This is Immunoglobulin iota chain from Mus musculus (Mouse).